The primary structure comprises 901 residues: Quinate repressor protein (901 aa).

The tract at residues 1–88 is sufficient for repression; the sequence is MSILVRPPKR…DSLQTRRKFP (88 aa). Disordered stretches follow at residues 26–59 and 878–901; these read LRDF…DGSR and EEQG…GQPM. Positions 31-43 are enriched in polar residues; it reads QGNSASTPINTSA.

The protein in the N-terminal section; belongs to the shikimate kinase family. This sequence in the 2nd section; belongs to the type-I 3-dehydroquinase family. It in the C-terminal section; belongs to the shikimate dehydrogenase family. In terms of assembly, interacts with qutA; transcriptional activator of the quinate utilization pathway genes.

Functionally, multi-domain repressor protein that negatively regulates transcription of the quinate utilization pathway genes. May mediate its repressor activity by binding directly to the qutA activator protein. The sequence is that of Quinate repressor protein (qutR) from Emericella nidulans (strain FGSC A4 / ATCC 38163 / CBS 112.46 / NRRL 194 / M139) (Aspergillus nidulans).